A 280-amino-acid polypeptide reads, in one-letter code: Probable inactive shikimate kinase like 1, chloroplastic (280 aa).

The N-terminal 54 residues, M1–R54, are a transit peptide targeting the chloroplast.

The protein belongs to the shikimate kinase family.

Its subcellular location is the plastid. It localises to the chloroplast. Its function is as follows. Required for chloroplast biogenesis. The protein is Probable inactive shikimate kinase like 1, chloroplastic (SKL1) of Arabidopsis thaliana (Mouse-ear cress).